An 88-amino-acid chain; its full sequence is Small ribosomal subunit protein bS20 (88 aa).

The segment at 1-27 (MANSKSAKKRALQSEKRRQHNASRRSM) is disordered.

Belongs to the bacterial ribosomal protein bS20 family.

Binds directly to 16S ribosomal RNA. This Shewanella baltica (strain OS223) protein is Small ribosomal subunit protein bS20.